The sequence spans 217 residues: Small ribosomal subunit protein uS3 (217 aa).

A KH type-2 domain is found at 38–106 (IRKYIDNALQ…KVHINVIEIK (69 aa)).

It belongs to the universal ribosomal protein uS3 family. In terms of assembly, part of the 30S ribosomal subunit. Forms a tight complex with proteins S10 and S14.

In terms of biological role, binds the lower part of the 30S subunit head. Binds mRNA in the 70S ribosome, positioning it for translation. The polypeptide is Small ribosomal subunit protein uS3 (Staphylococcus saprophyticus subsp. saprophyticus (strain ATCC 15305 / DSM 20229 / NCIMB 8711 / NCTC 7292 / S-41)).